The sequence spans 384 residues: S-adenosylmethionine synthase (384 aa).

Histidine 15 contributes to the ATP binding site. Residue aspartate 17 coordinates Mg(2+). Residue glutamate 43 participates in K(+) binding. L-methionine contacts are provided by glutamate 56 and glutamine 99. Positions 99 to 109 (QSPDINQGVDR) are flexible loop. ATP is bound by residues 164 to 166 (DAK), 230 to 231 (RF), aspartate 239, 245 to 246 (RK), alanine 262, and lysine 266. An L-methionine-binding site is contributed by aspartate 239. Residue lysine 270 participates in L-methionine binding.

This sequence belongs to the AdoMet synthase family. As to quaternary structure, homotetramer; dimer of dimers. The cofactor is Mg(2+). K(+) is required as a cofactor.

The protein resides in the cytoplasm. It carries out the reaction L-methionine + ATP + H2O = S-adenosyl-L-methionine + phosphate + diphosphate. It functions in the pathway amino-acid biosynthesis; S-adenosyl-L-methionine biosynthesis; S-adenosyl-L-methionine from L-methionine: step 1/1. In terms of biological role, catalyzes the formation of S-adenosylmethionine (AdoMet) from methionine and ATP. The overall synthetic reaction is composed of two sequential steps, AdoMet formation and the subsequent tripolyphosphate hydrolysis which occurs prior to release of AdoMet from the enzyme. This chain is S-adenosylmethionine synthase, found in Cronobacter sakazakii (strain ATCC BAA-894) (Enterobacter sakazakii).